We begin with the raw amino-acid sequence, 403 residues long: Poly(rC)-binding protein 4 (403 aa).

KH domains lie at 17–67 (TLTL…TITG), 101–154 (PVTL…TVSG), and 241–293 (TSSQ…TITG).

The protein resides in the cytoplasm. Single-stranded nucleic acid binding protein that binds preferentially to oligo dC. The chain is Poly(rC)-binding protein 4 (PCBP4) from Bos taurus (Bovine).